Consider the following 153-residue polypeptide: uncharacterized protein (153 aa).

The segment at 19–46 (EKSTRLEEDAMESEPLAGTKTRGRGRRR) is disordered.

This is an uncharacterized protein from Homo sapiens (Human).